Reading from the N-terminus, the 398-residue chain is Putative F-box/kelch-repeat protein At2g29780 (398 aa).

A disordered region spans residues 1–46 (MAIISETSDDGSHGGVPNKKPEELHKNPKEDDHQEEEVENHPPIPR). The span at 19 to 32 (KKPEELHKNPKEDD) shows a compositional bias: basic and acidic residues. Residues 43–90 (PIPRQIPQALIRRTVALIKRCHYPSLSLLSKAFRIVISSPELHQTRSS) form the F-box domain. 4 Kelch repeats span residues 148–195 (KMYV…VING), 196–241 (KIYV…GFVT), 243–289 (VVMQ…VIED), and 295–342 (DPYC…GGKL).

The polypeptide is Putative F-box/kelch-repeat protein At2g29780 (Arabidopsis thaliana (Mouse-ear cress)).